We begin with the raw amino-acid sequence, 159 residues long: Ribosomal RNA large subunit methyltransferase H (159 aa).

S-adenosyl-L-methionine is bound by residues Leu-76, Gly-108, and 127–132; that span reads FGRLTL.

This sequence belongs to the RNA methyltransferase RlmH family. Homodimer.

The protein localises to the cytoplasm. It carries out the reaction pseudouridine(1915) in 23S rRNA + S-adenosyl-L-methionine = N(3)-methylpseudouridine(1915) in 23S rRNA + S-adenosyl-L-homocysteine + H(+). Specifically methylates the pseudouridine at position 1915 (m3Psi1915) in 23S rRNA. This is Ribosomal RNA large subunit methyltransferase H from Listeria monocytogenes serotype 4a (strain HCC23).